Here is a 102-residue protein sequence, read N- to C-terminus: Malonate decarboxylase acyl carrier protein (102 aa).

Serine 27 carries the O-(phosphoribosyl dephospho-coenzyme A)serine modification.

It belongs to the MdcC family. Post-translationally, covalently binds the prosthetic group of malonate decarboxylase.

The protein resides in the cytoplasm. In terms of biological role, subunit of malonate decarboxylase, it is an acyl carrier protein to which acetyl and malonyl thioester residues are bound via a 2'-(5''-phosphoribosyl)-3'-dephospho-CoA prosthetic group and turn over during the catalytic mechanism. The protein is Malonate decarboxylase acyl carrier protein of Acinetobacter calcoaceticus.